The primary structure comprises 585 residues: Mycosin-5 (585 aa).

A signal peptide spans 1–39 (MQRFGTGSSRSWCGRAGTATIAAVLLASGALTGLPPAYA). A Peptidase S8 domain is found at 83–521 (PKYMEMLNLN…YGVVDPVAAL (439 aa)). Active-site charge relay system residues include Asp109 and His141. The span at 163–173 (VPRRPVTIPTT) shows a compositional bias: low complexity. Residues 163-269 (VPRRPVTIPT…PALGPPPDAF (107 aa)) form a disordered region. Composition is skewed to pro residues over residues 196-224 (PAPPPEEGVPPGAPVPGPEPPPAPGPQPP) and 252-267 (NPHPSAPSPALGPPPD). Ser466 functions as the Charge relay system in the catalytic mechanism. A helical membrane pass occupies residues 552–572 (VPIWVAAGGLAGALLIGGAVF).

The protein belongs to the peptidase S8 family.

It localises to the cell membrane. The protein is Mycosin-5 of Mycobacterium tuberculosis (strain ATCC 25618 / H37Rv).